The primary structure comprises 479 residues: Glycerol kinase 5 (479 aa).

2 residues coordinate ATP: S20 and S21. Glycerol contacts are provided by R90, D267, and Q268. Residues T289, G332, and G432 each coordinate ATP.

The protein belongs to the FGGY kinase family.

The protein resides in the cytoplasm. The enzyme catalyses glycerol + ATP = sn-glycerol 3-phosphate + ADP + H(+). It participates in polyol metabolism; glycerol degradation via glycerol kinase pathway; sn-glycerol 3-phosphate from glycerol: step 1/1. Skin-specific kinase that plays a key role in glycerol metabolism, catalyzing its phosphorylation to produce sn-glycerol 3-phosphate. Involved in skin-specific regulation of sterol regulatory element-binding protein (SREBP) processing and lipid biosynthesis. In Xenopus laevis (African clawed frog), this protein is Glycerol kinase 5 (gk5).